The sequence spans 101 residues: uncharacterized protein (101 aa).

The signal sequence occupies residues 1 to 18; that stretch reads MSINALLYVLSLALLIWT. The chain crosses the membrane as a helical span at residues 62–82; that stretch reads FQFDSIPSSSLSLSPFPFLFF.

The protein localises to the membrane. This is an uncharacterized protein from Saccharomyces cerevisiae (strain ATCC 204508 / S288c) (Baker's yeast).